The sequence spans 204 residues: Large ribosomal subunit protein eL15 (204 aa).

The protein belongs to the eukaryotic ribosomal protein eL15 family. As to quaternary structure, component of the large ribosomal subunit.

The protein localises to the cytoplasm. Its function is as follows. Component of the large ribosomal subunit. The ribosome is a large ribonucleoprotein complex responsible for the synthesis of proteins in the cell. This chain is Large ribosomal subunit protein eL15 (rpl15), found in Paramisgurnus dabryanus.